The following is a 221-amino-acid chain: MKSPAPYIDHTLLKADATSAQIRQLCLEAAHWQFASVCIPPRFVSEAVACLADSQVAVGTVVGFPLGYDTAAVKRAATAQAVAEGVDEIDMVIPLGAALEGRLDMVREDVIGVLDAAAGRLVKVIIECCYLENARKVELVELLAEAGADYVKTSTGFAVSGAAEADIRLLHQAAGGRIKVKAAGGVRDWETCRIMLKAGAHRVGTSNGVQIIQQWQEAPEL.

The active-site Proton donor/acceptor is the Asp-90. The Schiff-base intermediate with acetaldehyde role is filled by Lys-152. The active-site Proton donor/acceptor is Lys-181.

It belongs to the DeoC/FbaB aldolase family. DeoC type 1 subfamily.

It localises to the cytoplasm. It carries out the reaction 2-deoxy-D-ribose 5-phosphate = D-glyceraldehyde 3-phosphate + acetaldehyde. It functions in the pathway carbohydrate degradation; 2-deoxy-D-ribose 1-phosphate degradation; D-glyceraldehyde 3-phosphate and acetaldehyde from 2-deoxy-alpha-D-ribose 1-phosphate: step 2/2. Functionally, catalyzes a reversible aldol reaction between acetaldehyde and D-glyceraldehyde 3-phosphate to generate 2-deoxy-D-ribose 5-phosphate. This Syntrophotalea carbinolica (strain DSM 2380 / NBRC 103641 / GraBd1) (Pelobacter carbinolicus) protein is Deoxyribose-phosphate aldolase.